The chain runs to 373 residues: Response regulator aspartate phosphatase J (373 aa).

TPR repeat units lie at residues 99 to 135 and 146 to 179; these read YYFY…VEDE and AEVY…GRRR. Glutamate 147, tyrosine 150, glutamine 181, aspartate 192, tyrosine 217, asparagine 225, histidine 228, glutamine 260, tyrosine 297, lysine 300, and aspartate 335 together coordinate L-glutamyl-L-arginyl-glycyl-L-methionyl-L-threonine. 2 TPR repeats span residues 220 to 253 and 259 to 292; these read AAAY…FEEH and VQAV…AAEW. Residues 334 to 367 form a TPR 5 repeat; it reads EDLLHDTAERFNQLEHYESAAFFYRRLMNIKKKL.

This sequence belongs to the Rap family. In terms of assembly, monomer in solution. Homodimer.

The protein localises to the cytoplasm. Its activity is regulated as follows. Inhibited in vitro by the competence and sporulation stimulating factor (CSF), encoded by phrC. However, CSF has at least three targets (RapB, RapC, and RapJ) and the physiological importance of RapJ inhibition by CSF is unknown. Interaction with CSF induces a conformational change in RapJ. Functionally, involved in the regulation of sporulation. Acts as a phosphatase that specifically dephosphorylates the sporulation initiation phosphotransferase Spo0F and inhibits its activity. In Bacillus subtilis (strain 168), this protein is Response regulator aspartate phosphatase J (rapJ).